A 477-amino-acid chain; its full sequence is Small ribosomal subunit protein uS5m (477 aa).

This sequence belongs to the universal ribosomal protein uS5 family. In terms of assembly, component of the mitochondrial small ribosomal subunit (mt-SSU). Mature N.crassa 74S mitochondrial ribosomes consist of a small (37S) and a large (54S) subunit. The 37S small subunit contains a 16S ribosomal RNA (16S mt-rRNA) and 32 different proteins. The 54S large subunit contains a 23S rRNA (23S mt-rRNA) and 42 different proteins. uS3m, uS4m and uS5m form the narrow entry site of the mRNA channel.

The protein resides in the mitochondrion. Functionally, component of the mitochondrial ribosome (mitoribosome), a dedicated translation machinery responsible for the synthesis of mitochondrial genome-encoded proteins, including at least some of the essential transmembrane subunits of the mitochondrial respiratory chain. The mitoribosomes are attached to the mitochondrial inner membrane and translation products are cotranslationally integrated into the membrane. This chain is Small ribosomal subunit protein uS5m (mrps5), found in Neurospora crassa (strain ATCC 24698 / 74-OR23-1A / CBS 708.71 / DSM 1257 / FGSC 987).